We begin with the raw amino-acid sequence, 488 residues long: GTPase Der (488 aa).

EngA-type G domains lie at Pro-3 to Met-166 and Ile-199 to Thr-372. Residues Gly-9–Ser-16, Asp-56–Ile-60, Asn-118–Asp-121, Gly-205–Ser-212, Asp-252–Val-256, and Asn-317–Asp-320 each bind GTP. The region spanning Arg-373–Asp-457 is the KH-like domain. The tract at residues Met-469–Lys-488 is disordered. The segment covering Arg-473–Lys-488 has biased composition (basic residues).

The protein belongs to the TRAFAC class TrmE-Era-EngA-EngB-Septin-like GTPase superfamily. EngA (Der) GTPase family. As to quaternary structure, associates with the 50S ribosomal subunit.

GTPase that plays an essential role in the late steps of ribosome biogenesis. This Shewanella putrefaciens (strain CN-32 / ATCC BAA-453) protein is GTPase Der.